The sequence spans 247 residues: ATP synthase subunit a (247 aa).

Transmembrane regions (helical) follow at residues 24–44, 82–102, 112–132, 141–161, 194–214, and 219–239; these read IAFT…SLLM, FFPF…VGIV, IIVT…YGFY, LFVP…IEVI, MLGA…ALVV, and LELL…CIYI.

It belongs to the ATPase A chain family. F-type ATPases have 2 components, CF(1) - the catalytic core - and CF(0) - the membrane proton channel. CF(1) has five subunits: alpha(3), beta(3), gamma(1), delta(1), epsilon(1). CF(0) has three main subunits: a(1), b(2) and c(9-12). The alpha and beta chains form an alternating ring which encloses part of the gamma chain. CF(1) is attached to CF(0) by a central stalk formed by the gamma and epsilon chains, while a peripheral stalk is formed by the delta and b chains.

The protein resides in the cell inner membrane. In terms of biological role, key component of the proton channel; it plays a direct role in the translocation of protons across the membrane. This Nitrobacter hamburgensis (strain DSM 10229 / NCIMB 13809 / X14) protein is ATP synthase subunit a.